Consider the following 316-residue polypeptide: Rhomboid-related protein 4 (316 aa).

Topologically, residues 1 to 21 are cytoplasmic; it reads MQRRTRGIDTGLLLLLSQVFH. The chain crosses the membrane as a helical span at residues 22-42; the sequence is IGINNIPPVTLATLAVNVWFF. Residues 43 to 103 lie on the Extracellular side of the membrane; the sequence is LNPWKPLYHS…KLEKRLGSRW (61 aa). A helical transmembrane segment spans residues 104–124; the sequence is FAYIIATFSLLTGVVYLLLQF. Over 125 to 137 the chain is Cytoplasmic; that stretch reads ASAELMNQPDFKR. Residues 138–154 form a helical membrane-spanning segment; the sequence is NCAVGFSGVLFALKVLS. Ser144 functions as the Nucleophile in the catalytic mechanism. Over 155 to 182 the chain is Extracellular; that stretch reads NHYCPGGFVNILGFPVPNRFACWAELAA. Residues 183–203 traverse the membrane as a helical segment; sequence IHFCTPGTSFAGHLAGILVGL. His195 is a catalytic residue. The Cytoplasmic segment spans residues 204-316; the sequence is MYTQGPLKKI…RQRLHRFDGQ (113 aa). Positions 269-284 are ubiquitin-binding domain (UBD); it reads SEEEQLERALRASIWD. A VCP/p97-interacting motif (VIM) region spans residues 301–316; that stretch reads PEEEMRRQRLHRFDGQ.

This sequence belongs to the peptidase S54 family. In terms of assembly, interacts with BIK and STEAP3. Interacts (via C-terminal domain) with VCP. Interacts with ubiquitin and ubiquitinated proteins. As to expression, expressed in intestine, lung, brain, kidney, epididymis and testis.

The protein resides in the endoplasmic reticulum membrane. It is found in the mitochondrion membrane. It carries out the reaction Cleaves type-1 transmembrane domains using a catalytic dyad composed of serine and histidine that are contributed by different transmembrane domains.. With respect to regulation, inhibited by aprotinin. Its function is as follows. Intramembrane-cleaving serine protease that cleaves single transmembrane or multi-pass membrane proteins in the hydrophobic plane of the membrane, luminal loops and juxtamembrane regions. Involved in regulated intramembrane proteolysis and the subsequent release of functional polypeptides from their membrane anchors. Functional component of endoplasmic reticulum-associated degradation (ERAD) for misfolded membrane proteins. Required for the degradation process of some specific misfolded endoplasmic reticulum (ER) luminal proteins. Participates in the transfer of misfolded proteins from the ER to the cytosol, where they are destroyed by the proteasome in a ubiquitin-dependent manner. Functions in BIK, MPZ, PKD1, PTCRA, RHO, STEAP3 and TRAC processing. Involved in the regulation of exosomal secretion; inhibits the TSAP6-mediated secretion pathway. Involved in the regulation of apoptosis; modulates BIK-mediated apoptotic activity. Also plays a role in the regulation of spermatogenesis; inhibits apoptotic activity in spermatogonia. The protein is Rhomboid-related protein 4 (Rhbdd1) of Rattus norvegicus (Rat).